The chain runs to 187 residues: MNTQKRQQIRTEIRKIRANLTALQQHQAEQSVTQHALNLIEQRQAKNIALYFSFDGEISTKALIQSLWMQNKNVYLPVLHPFTKHYLLFLRYLPDTPMKQNQFGIWEPKLNVQNVLPLNELDILFTPLVAFDKKGNRLGMGGGFYDRTLQNWQNKSFIPVGLAYQCQQVENLPTEHWDVPLFDILVG.

Residues 6-10 (RQQIR), 139-146 (GMGGGFYD), and Asp-178 each bind ATP.

It belongs to the 5-formyltetrahydrofolate cyclo-ligase family.

It carries out the reaction (6S)-5-formyl-5,6,7,8-tetrahydrofolate + ATP = (6R)-5,10-methenyltetrahydrofolate + ADP + phosphate. The protein operates within one-carbon metabolism; tetrahydrofolate interconversion. Involved in the removal of 5-formyltetrahydrofolate. In vitro, it is a potent inhibitor of various folate-dependent enzymes in the C1 metabolism network and in vivo it might function as a folate storage. 5-formyltetrahydrofolate is also used as an antifolate rescue agent in cancer chemotherapy. Catalyzes the irreversible ATP-dependent transformation of 5-formyltetrahydrofolate (5-CHO-THF) to form 5,10-methenyltetrahydrofolate (5,10-CH=THF). The reverse reaction is catalyzed by the serine hydroxymethyltransferase GlyA (SHMT). The chain is 5-formyltetrahydrofolate cyclo-ligase from Haemophilus influenzae (strain ATCC 51907 / DSM 11121 / KW20 / Rd).